Here is a 223-residue protein sequence, read N- to C-terminus: Large ribosomal subunit protein uL3 (223 aa).

It belongs to the universal ribosomal protein uL3 family. In terms of assembly, part of the 50S ribosomal subunit. Forms a cluster with proteins L14 and L19.

Functionally, one of the primary rRNA binding proteins, it binds directly near the 3'-end of the 23S rRNA, where it nucleates assembly of the 50S subunit. In Nocardioides sp. (strain ATCC BAA-499 / JS614), this protein is Large ribosomal subunit protein uL3.